A 482-amino-acid chain; its full sequence is Proton extrusion protein PxcA (482 aa).

A run of 4 helical transmembrane segments spans residues 265-285 (FVLGLMIVPLLTQQVSKNLVI), 359-379 (PLKNAISDLFSLVALAIYFVL), 406-426 (IIILFTDVFVGFHSPHGWEVI), and 442-462 (FINMFIATFPVMLDTVFKYWI).

Belongs to the CemA family.

It localises to the cell inner membrane. In terms of biological role, required for H(+) efflux immediately after light irradiation to form a rapid H(+) concentration gradient across the thylakoid membranes. Together with PxcL, contributes to transient H(+) uptake following dark to light transition. This is Proton extrusion protein PxcA from Acaryochloris marina (strain MBIC 11017).